The chain runs to 213 residues: MRSNYIVIEGLEGAGKTTARNVVVDTLKELGIEQMVFTREPGGTQLAEKLRSLVLDIKSVGDEVIDVKAEVLMFYAARVQLVETVIKPALAEGQWVIGDRHDLSTQAYQGGGRGIDQQMLATLRNAVLGDFRPNLTLYLDVTPEVGLKRARARGELDRIEQESLDFFNRTRARYLELAAQDDSIRTIDATQSLEGVTRSIRETITAWLQEQQA.

10–17 (GLEGAGKT) lines the ATP pocket.

This sequence belongs to the thymidylate kinase family.

The catalysed reaction is dTMP + ATP = dTDP + ADP. Functionally, phosphorylation of dTMP to form dTDP in both de novo and salvage pathways of dTTP synthesis. In Enterobacter sp. (strain 638), this protein is Thymidylate kinase.